A 520-amino-acid chain; its full sequence is Bifunctional purine biosynthesis protein PurH (520 aa).

The MGS-like domain occupies 1 to 150; that stretch reads MSDDRKAIKR…KNHPSVAVVV (150 aa).

This sequence belongs to the PurH family.

The catalysed reaction is (6R)-10-formyltetrahydrofolate + 5-amino-1-(5-phospho-beta-D-ribosyl)imidazole-4-carboxamide = 5-formamido-1-(5-phospho-D-ribosyl)imidazole-4-carboxamide + (6S)-5,6,7,8-tetrahydrofolate. It carries out the reaction IMP + H2O = 5-formamido-1-(5-phospho-D-ribosyl)imidazole-4-carboxamide. The protein operates within purine metabolism; IMP biosynthesis via de novo pathway; 5-formamido-1-(5-phospho-D-ribosyl)imidazole-4-carboxamide from 5-amino-1-(5-phospho-D-ribosyl)imidazole-4-carboxamide (10-formyl THF route): step 1/1. It functions in the pathway purine metabolism; IMP biosynthesis via de novo pathway; IMP from 5-formamido-1-(5-phospho-D-ribosyl)imidazole-4-carboxamide: step 1/1. This Corynebacterium glutamicum (strain ATCC 13032 / DSM 20300 / JCM 1318 / BCRC 11384 / CCUG 27702 / LMG 3730 / NBRC 12168 / NCIMB 10025 / NRRL B-2784 / 534) protein is Bifunctional purine biosynthesis protein PurH.